The following is a 30-amino-acid chain: Neurotoxin II.22.5 (30 aa).

Residues 1–30 (KEGYIVNYHTGCKYTCAKLGDNDYCLRECK) form the LCN-type CS-alpha/beta domain.

Belongs to the long (4 C-C) scorpion toxin superfamily. Sodium channel inhibitor family. Beta subfamily. Expressed by the venom gland.

It is found in the secreted. Its function is as follows. Binds to sodium channels (Nav) and inhibits the inactivation of the activated channels, thereby blocking neuronal transmission. The protein is Neurotoxin II.22.5 of Centruroides tecomanus (Scorpion).